A 191-amino-acid polypeptide reads, in one-letter code: MIRYLRGLVLKKEAGGFVLLAGGVGFFLQAPTPFLQALEEGKEVGVHTHLLLKEEGLSLYGFPDEENLALFELLLSVSGVGPKVALALLSALPPRLLARALLEGDARLLTSASGVGRRLAERIALELKGKVPPHLLAGEKVESEAAEEAVMALAALGFKEAQARAVVLDLLAQNPKARAQDLIKEALKRLR.

The interval 1 to 63 (MIRYLRGLVL…EEGLSLYGFP (63 aa)) is domain I. The domain II stretch occupies residues 64–136 (DEENLALFEL…LKGKVPPHLL (73 aa)). A flexible linker region spans residues 136 to 140 (LAGEK). Positions 141-191 (VESEAAEEAVMALAALGFKEAQARAVVLDLLAQNPKARAQDLIKEALKRLR) are domain III.

This sequence belongs to the RuvA family. In terms of assembly, homotetramer. Forms an RuvA(8)-RuvB(12)-Holliday junction (HJ) complex. HJ DNA is sandwiched between 2 RuvA tetramers; dsDNA enters through RuvA and exits via RuvB. An RuvB hexamer assembles on each DNA strand where it exits the tetramer. Each RuvB hexamer is contacted by two RuvA subunits (via domain III) on 2 adjacent RuvB subunits; this complex drives branch migration. In the full resolvosome a probable DNA-RuvA(4)-RuvB(12)-RuvC(2) complex forms which resolves the HJ.

It is found in the cytoplasm. Its function is as follows. The RuvA-RuvB-RuvC complex processes Holliday junction (HJ) DNA during genetic recombination and DNA repair, while the RuvA-RuvB complex plays an important role in the rescue of blocked DNA replication forks via replication fork reversal (RFR). RuvA specifically binds to HJ cruciform DNA, conferring on it an open structure. The RuvB hexamer acts as an ATP-dependent pump, pulling dsDNA into and through the RuvAB complex. HJ branch migration allows RuvC to scan DNA until it finds its consensus sequence, where it cleaves and resolves the cruciform DNA. This is Holliday junction branch migration complex subunit RuvA from Thermus thermophilus (strain ATCC BAA-163 / DSM 7039 / HB27).